Here is a 1058-residue protein sequence, read N- to C-terminus: Carbamoyl phosphate synthase large chain (1058 aa).

A carboxyphosphate synthetic domain region spans residues 1–401; that stretch reads MPKRTDIQKI…SLLKACRSLE (401 aa). The ATP site is built by Arg129, Arg169, Gly175, Gly176, Arg208, Ile210, Glu215, Gly241, Ile242, His243, Gln284, and Glu298. The ATP-grasp 1 domain maps to 133-327; that stretch reads KQLMEELEQP…IAKLAAKIAV (195 aa). Mg(2+) contacts are provided by Gln284, Glu298, and Asn300. Residues Gln284, Glu298, and Asn300 each coordinate Mn(2+). Residues 402–546 form an oligomerization domain region; that stretch reads IGVHHNEIPE…YSTYGWENES (145 aa). Positions 547–929 are carbamoyl phosphate synthetic domain; it reads IRSDKESVLV…ALYKAFEASY (383 aa). The ATP-grasp 2 domain maps to 671–861; that stretch reads EQALKELDIP…MAQVATKLIL (191 aa). ATP-binding residues include Arg707, Ser746, Ile748, Glu752, Gly777, Val778, His779, Ser780, Gln820, and Glu832. 3 residues coordinate Mg(2+): Gln820, Glu832, and Asn834. Mn(2+)-binding residues include Gln820, Glu832, and Asn834. An MGS-like domain is found at 930-1058; the sequence is LHLPTFGNVV…ESRSFVTEAI (129 aa). The segment at 930 to 1058 is allosteric domain; it reads LHLPTFGNVV…ESRSFVTEAI (129 aa).

This sequence belongs to the CarB family. Composed of two chains; the small (or glutamine) chain promotes the hydrolysis of glutamine to ammonia, which is used by the large (or ammonia) chain to synthesize carbamoyl phosphate. Tetramer of heterodimers (alpha,beta)4. The cofactor is Mg(2+). Mn(2+) serves as cofactor.

It catalyses the reaction hydrogencarbonate + L-glutamine + 2 ATP + H2O = carbamoyl phosphate + L-glutamate + 2 ADP + phosphate + 2 H(+). The catalysed reaction is hydrogencarbonate + NH4(+) + 2 ATP = carbamoyl phosphate + 2 ADP + phosphate + 2 H(+). It functions in the pathway amino-acid biosynthesis; L-arginine biosynthesis; carbamoyl phosphate from bicarbonate: step 1/1. The protein operates within pyrimidine metabolism; UMP biosynthesis via de novo pathway; (S)-dihydroorotate from bicarbonate: step 1/3. Its function is as follows. Large subunit of the glutamine-dependent carbamoyl phosphate synthetase (CPSase). CPSase catalyzes the formation of carbamoyl phosphate from the ammonia moiety of glutamine, carbonate, and phosphate donated by ATP, constituting the first step of 2 biosynthetic pathways, one leading to arginine and/or urea and the other to pyrimidine nucleotides. The large subunit (synthetase) binds the substrates ammonia (free or transferred from glutamine from the small subunit), hydrogencarbonate and ATP and carries out an ATP-coupled ligase reaction, activating hydrogencarbonate by forming carboxy phosphate which reacts with ammonia to form carbamoyl phosphate. The protein is Carbamoyl phosphate synthase large chain of Streptococcus pneumoniae (strain P1031).